The following is a 435-amino-acid chain: Keratin, type I cytoskeletal 18 (435 aa).

Positions 1–28 (MSLRSSYSVRSSTSQVPVSQMSQMSQMS) are enriched in low complexity. The interval 1–36 (MSLRSSYSVRSSTSQVPVSQMSQMSQMSIKRTTNVP) is disordered. The tract at residues 2-88 (SLRSSYSVRS…TGATGDIMGN (87 aa)) is head. The coil 1A stretch occupies residues 89-123 (EKMAMQNLNDRLASYLRSETLEQANSKLELKIREA). One can recognise an IF rod domain in the interval 89–399 (EKMAMQNLND…RLLDGGDFKL (311 aa)). Positions 124–140 (LEKKGPEVCDYSRFQPI) are linker 1. Residues 141-232 (IDDLRRKIFD…KNHDNEVMEL (92 aa)) are coil 1B. Positions 233–256 (RNQISHSGVQVDVDAPKGQDLAKI) are linker 12. The interval 257-394 (MEEIRSKYEK…IATYRRLLDG (138 aa)) is coil 2. Residues 395-435 (GDFKLQDALEEQKRVKVMTVTQTLVDGKVVSSSTETKEKKF) form a tail region.

The protein belongs to the intermediate filament family. As to quaternary structure, heterotetramer of two type I and two type II keratins. Keratin-18 associates with keratin-8. In terms of processing, phosphorylated. Post-translationally, proteolytically cleaved by caspases during epithelial cell apoptosis. In terms of tissue distribution, abundantly expressed in an even distribution throughout the optic nerve, localizing specifically to the astrocyte domains. Moderately expressed in spinal cord, brain, liver and oocytes.

In terms of biological role, when phosphorylated, plays a role in filament reorganization. In Carassius auratus (Goldfish), this protein is Keratin, type I cytoskeletal 18 (krt18).